A 169-amino-acid polypeptide reads, in one-letter code: Ureidoglycolate lyase (169 aa).

It belongs to the ureidoglycolate lyase family. In terms of assembly, homodimer. Requires Ni(2+) as cofactor.

The enzyme catalyses (S)-ureidoglycolate = urea + glyoxylate. It participates in nitrogen metabolism; (S)-allantoin degradation. Catalyzes the catabolism of the allantoin degradation intermediate (S)-ureidoglycolate, generating urea and glyoxylate. Involved in the utilization of allantoin as nitrogen source. The protein is Ureidoglycolate lyase of Brucella melitensis biotype 2 (strain ATCC 23457).